We begin with the raw amino-acid sequence, 605 residues long: Formin-binding protein 1-like (605 aa).

The region spanning 1–263 (MSWGTELWDQ…AAKSVDERRD (263 aa)) is the F-BAR domain. Residues 66-258 (FTSCIAFFNI…EGMILAAKSV (193 aa)) are a coiled coil. Residues 245 to 535 (SKCLEGMILA…EFDDEFEDDD (291 aa)) form an interaction with CDC42 region. S295 carries the post-translational modification Phosphoserine. Residues 325-345 (FGKKPKPQSPPLTPTSLFTSS) are disordered. Positions 392–484 (LEDFSHLPPE…VEGKTGVRGD (93 aa)) form a coiled coil. An REM-1 domain is found at 397–474 (HLPPEQRRKK…IHKNEAWLSE (78 aa)). The segment covering 480–490 (GVRGDRRHSSD) has biased composition (basic and acidic residues). The segment at 480–539 (GVRGDRRHSSDINHLVTQGRESPEGSYTDDANQEVRGPPQQHGHHSEFDDEFEDDDPLPA) is disordered. A phosphoserine mark is found at S488, S501, and S505. An interaction with DNM1 region spans residues 522–605 (GHHSEFDDEF…VTLEKNSKGS (84 aa)). Residues 527 to 536 (FDDEFEDDDP) show a composition bias toward acidic residues. In terms of domain architecture, SH3 spans 538-599 (PAIGHCKAIY…PTTYIDVTLE (62 aa)). The segment at 541 to 597 (GHCKAIYPFDGHNEGTLAMKEGEVLYIIEEDKGDGWTRARRQNGEEGYVPTTYIDVT) is interaction with DNM2 and WASL. The tract at residues 541 to 605 (GHCKAIYPFD…VTLEKNSKGS (65 aa)) is interaction with DAAM1, DIAPH1 and DIAPH2.

Belongs to the FNBP1 family. Homodimerizes, the dimers can polymerize end-to-end to form filamentous structures. Interacts with GTP-bound CDC42. Interacts with DAAM1, DIAPH1, DIAPH2, DNM1, DNM2 and WASL/N-WASP. Interacts with ATG3. Interacts (via SH3 domain) with ABI1, WASF2, CDC42 and WIPF1. As to expression, isoform 1 is expressed in brain. Isoform 2 is expressed in brain, kidney and lung. Within the brain expression is seen in cortical neurons, hippocampal pyramidal neurons, hypothalamus and piriform cortex.

The protein localises to the cytoplasm. The protein resides in the cytoskeleton. Its subcellular location is the cell cortex. It is found in the cytoplasmic vesicle. It localises to the cell membrane. Its function is as follows. Required to coordinate membrane tubulation with reorganization of the actin cytoskeleton during endocytosis. May bind to lipids such as phosphatidylinositol 4,5-bisphosphate and phosphatidylserine and promote membrane invagination and the formation of tubules. Also promotes CDC42-induced actin polymerization by activating the WASL-WASPIP complex, the predominant form of WASL/N-WASP in cells. Actin polymerization may promote the fission of membrane tubules to form endocytic vesicles. Essential for autophagy of intracellular bacterial pathogens. May negatively regulate neurite extension and axon branching in developing neurons. The polypeptide is Formin-binding protein 1-like (Fnbp1l) (Rattus norvegicus (Rat)).